Reading from the N-terminus, the 1052-residue chain is Isoleucine--tRNA ligase (1052 aa).

The short motif at 58–68 (PFANGLPHYGH) is the 'HIGH' region element. The 'KMSKS' region motif lies at 627-631 (KMSKS). Lys630 provides a ligand contact to ATP.

It belongs to the class-I aminoacyl-tRNA synthetase family. IleS type 2 subfamily. As to quaternary structure, monomer. The cofactor is Zn(2+).

It localises to the cytoplasm. The enzyme catalyses tRNA(Ile) + L-isoleucine + ATP = L-isoleucyl-tRNA(Ile) + AMP + diphosphate. Functionally, catalyzes the attachment of isoleucine to tRNA(Ile). As IleRS can inadvertently accommodate and process structurally similar amino acids such as valine, to avoid such errors it has two additional distinct tRNA(Ile)-dependent editing activities. One activity is designated as 'pretransfer' editing and involves the hydrolysis of activated Val-AMP. The other activity is designated 'posttransfer' editing and involves deacylation of mischarged Val-tRNA(Ile). This Corynebacterium diphtheriae (strain ATCC 700971 / NCTC 13129 / Biotype gravis) protein is Isoleucine--tRNA ligase.